We begin with the raw amino-acid sequence, 299 residues long: 4-diphosphocytidyl-2-C-methyl-D-erythritol kinase (299 aa).

The active site involves K10. 96–106 provides a ligand contact to ATP; it reads PVAGGMAGGSA. Residue D138 is part of the active site.

Belongs to the GHMP kinase family. IspE subfamily.

It carries out the reaction 4-CDP-2-C-methyl-D-erythritol + ATP = 4-CDP-2-C-methyl-D-erythritol 2-phosphate + ADP + H(+). It participates in isoprenoid biosynthesis; isopentenyl diphosphate biosynthesis via DXP pathway; isopentenyl diphosphate from 1-deoxy-D-xylulose 5-phosphate: step 3/6. Functionally, catalyzes the phosphorylation of the position 2 hydroxy group of 4-diphosphocytidyl-2C-methyl-D-erythritol. This is 4-diphosphocytidyl-2-C-methyl-D-erythritol kinase from Streptomyces coelicolor (strain ATCC BAA-471 / A3(2) / M145).